The chain runs to 184 residues: Alpha-tubulin N-acetyltransferase (184 aa).

The region spanning 1–174 is the N-acetyltransferase domain; sequence MDTHGEKMKN…NNFVIFAEYF (174 aa). Acetyl-CoA contacts are provided by residues 108-121 and 144-153; these read FYIR…GLGL and SHKLRSFLKK.

This sequence belongs to the acetyltransferase ATAT1 family.

It catalyses the reaction L-lysyl-[alpha-tubulin] + acetyl-CoA = N(6)-acetyl-L-lysyl-[alpha-tubulin] + CoA + H(+). Its function is as follows. Specifically acetylates 'Lys-40' in alpha-tubulin on the lumenal side of microtubules. Promotes microtubule destabilization and accelerates microtubule dynamics; this activity may be independent of acetylation activity. Acetylates alpha-tubulin with a slow enzymatic rate, due to a catalytic site that is not optimized for acetyl transfer. Enters the microtubule through each end and diffuses quickly throughout the lumen of microtubules. Acetylates only long/old microtubules because of its slow acetylation rate since it does not have time to act on dynamically unstable microtubules before the enzyme is released. This is Alpha-tubulin N-acetyltransferase from Plasmodium vivax (strain Salvador I).